A 201-amino-acid chain; its full sequence is Ras-related protein Rab-9B (201 aa).

10 residues coordinate GTP: valine 18, glycine 19, lysine 20, serine 21, serine 22, aspartate 33, serine 34, alanine 36, histidine 38, and threonine 39. Residue serine 21 participates in Mg(2+) binding. The short motif at 31–42 (KFDSQAFHTIGV) is the Switch 1 element. Serine 34 is modified (phosphoserine). 2 residues coordinate Mg(2+): threonine 39 and aspartate 62. The short motif at 64–78 (AGQERFKSLRTPFYR) is the Switch 2 element. Residues glycine 65, asparagine 124, lysine 125, alanine 155, and lysine 156 each coordinate GTP. S-geranylgeranyl cysteine attachment occurs at residues cysteine 200 and cysteine 201.

It belongs to the small GTPase superfamily. Rab family. Interacts (GTP-bound form) with SGSM1; the GDP-bound form has much lower affinity for SGSM1. The GTP-bound form but not the GDP-bound form interacts with HPS4 and the BLOC-3 complex (heterodimer of HPS1 and HPS4) but does not interact with HPS1 alone. Interacts (GTP-bound form) with NDE1. Mg(2+) serves as cofactor.

The protein localises to the cell membrane. The protein resides in the cytoplasmic vesicle. It is found in the phagosome membrane. It carries out the reaction GTP + H2O = GDP + phosphate + H(+). Its activity is regulated as follows. Regulated by guanine nucleotide exchange factors (GEFs) which promote the exchange of bound GDP for free GTP. Regulated by GTPase activating proteins (GAPs) which increase the GTP hydrolysis activity. Inhibited by GDP dissociation inhibitors (GDIs). In terms of biological role, the small GTPases Rab are key regulators of intracellular membrane trafficking, from the formation of transport vesicles to their fusion with membranes. Rabs cycle between an inactive GDP-bound form and an active GTP-bound form that is able to recruit to membranes different sets of downstream effectors directly responsible for vesicle formation, movement, tethering and fusion. RAB9B is involved in the transport of proteins between the endosomes and the trans Golgi network. May use NDE1/NDEL1 as an effector to interact with the dynein motor complex in order to control retrograde trafficking of RAB9-associated late endosomes to the TGN. The sequence is that of Ras-related protein Rab-9B from Mus musculus (Mouse).